Here is a 297-residue protein sequence, read N- to C-terminus: Formylmethanofuran--tetrahydromethanopterin formyltransferase (297 aa).

Belongs to the FTR family. Homotetramer.

Its subcellular location is the cytoplasm. The enzyme catalyses N-formylmethanofuran + 5,6,7,8-tetrahydromethanopterin + H(+) = N(5)-formyl-5,6,7,8-tetrahydromethanopterin + methanofuran. It participates in metabolic intermediate metabolism; lactate oxidation. Functionally, catalyzes the transfer of a formyl group from 5-formyl tetrahydromethanopterin (5-formyl-H(4)MPT) to methanofuran (MFR) to produce formylmethanofuran (formyl-MFR) and tetrahydromethanopterin (H(4)MPT). The protein is Formylmethanofuran--tetrahydromethanopterin formyltransferase of Archaeoglobus fulgidus (strain ATCC 49558 / DSM 4304 / JCM 9628 / NBRC 100126 / VC-16).